The primary structure comprises 264 residues: L-aspartate dehydrogenase (264 aa).

2 residues coordinate NAD(+): alanine 120 and asparagine 186. Histidine 216 is an active-site residue.

It belongs to the L-aspartate dehydrogenase family.

It carries out the reaction L-aspartate + NADP(+) + H2O = oxaloacetate + NH4(+) + NADPH + H(+). The enzyme catalyses L-aspartate + NAD(+) + H2O = oxaloacetate + NH4(+) + NADH + H(+). Its pathway is cofactor biosynthesis; NAD(+) biosynthesis; iminoaspartate from L-aspartate (dehydrogenase route): step 1/1. Functionally, specifically catalyzes the NAD or NADP-dependent dehydrogenation of L-aspartate to iminoaspartate. This is L-aspartate dehydrogenase from Serratia proteamaculans (strain 568).